Reading from the N-terminus, the 170-residue chain is Adenine phosphoribosyltransferase (170 aa).

This sequence belongs to the purine/pyrimidine phosphoribosyltransferase family. In terms of assembly, homodimer.

Its subcellular location is the cytoplasm. The enzyme catalyses AMP + diphosphate = 5-phospho-alpha-D-ribose 1-diphosphate + adenine. The protein operates within purine metabolism; AMP biosynthesis via salvage pathway; AMP from adenine: step 1/1. In terms of biological role, catalyzes a salvage reaction resulting in the formation of AMP, that is energically less costly than de novo synthesis. In Streptococcus pneumoniae (strain Hungary19A-6), this protein is Adenine phosphoribosyltransferase.